We begin with the raw amino-acid sequence, 239 residues long: MNIGVIFAGGVGRRMNTKGKPKQFLEVHGKPIIVHTIDIFQNTEAIDAVVVVCVSDWLDYMNNLVERFNLTKVKAVVAGGETGQMSIFKGLEAAEQLATDDAVVLIHDGVRPLINEEVINANIKSVKETGSAVTSVRAKETVVLVNDSSKISEVVDRTRSFIAKAPQSFYLSDILSVERDAISKGITDAIDSSTLMGMYNRELTIVEGPYENIKITTPDDFYMFKALYDARENEQIYGM.

Residues 7–10 and 80–86 contribute to the CTP site; these read FAGG and GETGQMS.

It belongs to the IspD/TarI cytidylyltransferase family. TarI subfamily.

It catalyses the reaction D-ribitol 5-phosphate + CTP + H(+) = CDP-L-ribitol + diphosphate. Its pathway is cell wall biogenesis; poly(ribitol phosphate) teichoic acid biosynthesis. Catalyzes the transfer of the cytidylyl group of CTP to D-ribitol 5-phosphate. The sequence is that of Ribitol-5-phosphate cytidylyltransferase from Streptococcus agalactiae serotype III (strain NEM316).